Reading from the N-terminus, the 160-residue chain is Ribosomal RNA large subunit methyltransferase H (160 aa).

S-adenosyl-L-methionine contacts are provided by residues Leu76, Gly108, and 127–132 (FGALTW).

The protein belongs to the RNA methyltransferase RlmH family. Homodimer.

The protein localises to the cytoplasm. It carries out the reaction pseudouridine(1915) in 23S rRNA + S-adenosyl-L-methionine = N(3)-methylpseudouridine(1915) in 23S rRNA + S-adenosyl-L-homocysteine + H(+). Functionally, specifically methylates the pseudouridine at position 1915 (m3Psi1915) in 23S rRNA. This chain is Ribosomal RNA large subunit methyltransferase H, found in Mesorhizobium japonicum (strain LMG 29417 / CECT 9101 / MAFF 303099) (Mesorhizobium loti (strain MAFF 303099)).